Reading from the N-terminus, the 192-residue chain is Peptidyl-tRNA hydrolase (192 aa).

Y18 contributes to the tRNA binding site. H23 serves as the catalytic Proton acceptor. TRNA is bound by residues F69, N71, and N117.

It belongs to the PTH family. In terms of assembly, monomer.

The protein resides in the cytoplasm. It catalyses the reaction an N-acyl-L-alpha-aminoacyl-tRNA + H2O = an N-acyl-L-amino acid + a tRNA + H(+). Functionally, hydrolyzes ribosome-free peptidyl-tRNAs (with 1 or more amino acids incorporated), which drop off the ribosome during protein synthesis, or as a result of ribosome stalling. Its function is as follows. Catalyzes the release of premature peptidyl moieties from peptidyl-tRNA molecules trapped in stalled 50S ribosomal subunits, and thus maintains levels of free tRNAs and 50S ribosomes. This chain is Peptidyl-tRNA hydrolase, found in Neisseria meningitidis serogroup B (strain ATCC BAA-335 / MC58).